The following is a 577-amino-acid chain: Arginine--tRNA ligase (577 aa).

Positions proline 122 to histidine 132 match the 'HIGH' region motif.

It belongs to the class-I aminoacyl-tRNA synthetase family. Monomer.

The protein resides in the cytoplasm. The enzyme catalyses tRNA(Arg) + L-arginine + ATP = L-arginyl-tRNA(Arg) + AMP + diphosphate. The polypeptide is Arginine--tRNA ligase (Aliivibrio salmonicida (strain LFI1238) (Vibrio salmonicida (strain LFI1238))).